The sequence spans 373 residues: Protein translocase subunit SecF (373 aa).

6 helical membrane passes run 26–46 (IWYGISILITITAIVGLAVRG), 142–162 (WQGLGIFMVLVVIYLAIAFEW), 166–186 (LAAFVALIHDITITVGIYALV), 193–213 (GTVIGLLTILGYSLYDTVVVF), 251–271 (VVALLPVAGLLFIGGGVLGAG), and 280–300 (LFVGLAAGAYSSIFIATPLVA). Residues 322–332 (QGAAKGESAES) are compositionally biased toward low complexity. Residues 322 to 373 (QGAAKGESAESAADEGAYDADEPDDAAPAVVGPRNQPASRGRGRGRPSGKRR) are disordered. A compositionally biased stretch (acidic residues) spans 333-346 (AADEGAYDADEPDD). Residues 362–373 (GRGRGRPSGKRR) are compositionally biased toward basic residues.

Belongs to the SecD/SecF family. SecF subfamily. As to quaternary structure, forms a complex with SecD. Part of the essential Sec protein translocation apparatus which comprises SecA, SecYEG and auxiliary proteins SecDF. Other proteins may also be involved.

It localises to the cell membrane. Part of the Sec protein translocase complex. Interacts with the SecYEG preprotein conducting channel. SecDF uses the proton motive force (PMF) to complete protein translocation after the ATP-dependent function of SecA. In Streptomyces coelicolor (strain ATCC BAA-471 / A3(2) / M145), this protein is Protein translocase subunit SecF.